A 288-amino-acid chain; its full sequence is Nucleotide-binding protein Tola_2941 (288 aa).

8 to 15 serves as a coordination point for ATP; the sequence is GRSGSGKT. Position 56-59 (56-59) interacts with GTP; the sequence is DVRN.

It belongs to the RapZ-like family.

Displays ATPase and GTPase activities. In Tolumonas auensis (strain DSM 9187 / NBRC 110442 / TA 4), this protein is Nucleotide-binding protein Tola_2941.